We begin with the raw amino-acid sequence, 337 residues long: Histidine N-acetyltransferase (337 aa).

A propeptide spans 1–2 (MK) (removed in mature form). The N-acetyltransferase domain maps to 21–157 (LQFSVATEED…GILLMRFRAE (137 aa)).

Expressed exclusively in the brain and lens.

It carries out the reaction L-histidine + acetyl-CoA = N(alpha)-acetyl-L-histidine + CoA + H(+). Its function is as follows. Enzyme responsible for the N-acetyl-histidine (NAH) synthesis, which is a major constituent of brain and lens of ectothermic vertebrates. This chain is Histidine N-acetyltransferase (hisat), found in Oreochromis niloticus (Nile tilapia).